A 93-amino-acid polypeptide reads, in one-letter code: uncharacterized protein (93 aa).

The region spanning 1–76 (MDSHTTEKRR…IQTIEPDESM (76 aa)) is the Sm domain.

In terms of assembly, part of the core SMN complex at least composed of smn1, yip11/gem2, gem6, gem7 and gem8. Interacts with gem7; the interaction is direct.

In terms of biological role, the SMN complex catalyzes the assembly of small nuclear ribonucleoproteins (snRNPs), the building blocks of the spliceosome, and thereby plays an important role in the splicing of cellular pre-mRNAs. Most spliceosomal snRNPs contain a common set of Sm proteins smb1, smd1, smd2, smd3, sme1, smf1 and smg1 that assemble in a heptameric protein ring on the Sm site of the small nuclear RNA to form the core snRNP (Sm core). In the cytosol, the Sm proteins smd1, smd2, sme1, smf1 and smg1 (5Sm) are trapped in an inactive 6S pICln-Sm complex by the chaperone saf5. To complete assembly of core snRNPs, the SMN complex accepts 5Sm from saf5. Binding of snRNA inside 5Sm triggers eviction of the SMN complex, thereby allowing binding of smd3 and smb1 to complete assembly of the core snRNP. This is an uncharacterized protein from Schizosaccharomyces pombe (strain 972 / ATCC 24843) (Fission yeast).